We begin with the raw amino-acid sequence, 768 residues long: C-type polyheme cytochrome OmcC (768 aa).

The first 23 residues, 1-23 (MSRKVTKYSAVLAVSLFAAALAG), serve as a signal peptide directing secretion. The N-palmitoyl cysteine moiety is linked to residue cysteine 24. Residue cysteine 24 is the site of S-diacylglycerol cysteine attachment. Heme c is bound by residues cysteine 48, cysteine 51, histidine 52, cysteine 80, cysteine 83, histidine 84, cysteine 112, cysteine 115, histidine 116, cysteine 148, cysteine 151, histidine 152, cysteine 193, cysteine 196, histidine 197, cysteine 238, cysteine 241, histidine 242, cysteine 320, cysteine 323, histidine 324, cysteine 405, cysteine 408, histidine 409, cysteine 454, cysteine 457, histidine 458, cysteine 504, cysteine 507, histidine 508, cysteine 579, cysteine 582, histidine 583, cysteine 611, cysteine 614, and histidine 615.

Binds 12 heme c groups per subunit.

The protein resides in the cell outer membrane. Functionally, not involved in Fe(3+) reduction. This is C-type polyheme cytochrome OmcC (omcC) from Geobacter sulfurreducens (strain ATCC 51573 / DSM 12127 / PCA).